Reading from the N-terminus, the 763-residue chain is Phosphoglycerol transferase I (763 aa).

Helical transmembrane passes span 1–21, 26–46, 77–97, and 108–128; these read MSEL…AWKA, WWFA…ITLY, ILPG…LGWV, and VGYS…SPAF.

The protein belongs to the OpgB family.

Its subcellular location is the cell inner membrane. The enzyme catalyses a phosphatidylglycerol + a membrane-derived-oligosaccharide D-glucose = a 1,2-diacyl-sn-glycerol + a membrane-derived-oligosaccharide 6-(glycerophospho)-D-glucose.. It functions in the pathway glycan metabolism; osmoregulated periplasmic glucan (OPG) biosynthesis. Transfers a phosphoglycerol residue from phosphatidylglycerol to the membrane-bound nascent glucan backbones. In Salmonella heidelberg (strain SL476), this protein is Phosphoglycerol transferase I.